The primary structure comprises 227 residues: MSILLPNMAEFDTISELEEEEEAATSSSSPSSSPSSSSSSSVSGPDEDEEDEEEEEEEDEEEEDEEEEEEEVPPPPRVVSEEHLRRYAPDPVLVRGAGHITVFGLSNKFDTEFPSVLTGKVAPEEFKTSIGRVNSCLKKALPVNVKWLLCGCLCCCCTLGCSLWPVICLNKRTRRSIQKLLEWENNRLYHKLALHWKLTKRKCETSNMMEYVILIEFLPKYPIFRPD.

The segment at 1-84 (MSILLPNMAE…PPRVVSEEHL (84 aa)) is disordered. Residues 13 to 23 (TISELEEEEEA) are compositionally biased toward acidic residues. Positions 24–44 (ATSSSSPSSSPSSSSSSSVSG) are enriched in low complexity. A compositionally biased stretch (acidic residues) spans 45–72 (PDEDEEDEEEEEEEDEEEEDEEEEEEEV). Positions 46-73 (DEDEEDEEEEEEEDEEEEDEEEEEEEVP) form a coiled coil.

It belongs to the CHIC family. Palmitoylated. Expressed moderately in the brain.

It localises to the cell membrane. The protein localises to the cytoplasmic vesicle. This Mus musculus (Mouse) protein is Cysteine-rich hydrophobic domain-containing protein 1 (Chic1).